Here is a 343-residue protein sequence, read N- to C-terminus: Heat-inducible transcription repressor HrcA (343 aa).

This sequence belongs to the HrcA family.

Its function is as follows. Negative regulator of class I heat shock genes (grpE-dnaK-dnaJ and groELS operons). Prevents heat-shock induction of these operons. The chain is Heat-inducible transcription repressor HrcA from Bacillus cytotoxicus (strain DSM 22905 / CIP 110041 / 391-98 / NVH 391-98).